The sequence spans 476 residues: Cobyric acid synthase (476 aa).

Positions 242-428 constitute a GATase cobBQ-type domain; sequence AFRVVVPVPP…LHGLFDTPDA (187 aa). The Nucleophile role is filled by Cys-323. Residue His-420 is part of the active site.

The protein belongs to the CobB/CobQ family. CobQ subfamily.

It participates in cofactor biosynthesis; adenosylcobalamin biosynthesis. In terms of biological role, catalyzes amidations at positions B, D, E, and G on adenosylcobyrinic A,C-diamide. NH(2) groups are provided by glutamine, and one molecule of ATP is hydrogenolyzed for each amidation. This is Cobyric acid synthase from Janthinobacterium sp. (strain Marseille) (Minibacterium massiliensis).